The following is a 715-amino-acid chain: Elongation factor G (715 aa).

Residues 8–290 (NRYRNIGICA…AVIDFLPAPT (283 aa)) form the tr-type G domain. GTP contacts are provided by residues 17-24 (AHVDAGKT), 88-92 (DTPGH), and 142-145 (NKMD).

This sequence belongs to the TRAFAC class translation factor GTPase superfamily. Classic translation factor GTPase family. EF-G/EF-2 subfamily.

The protein localises to the cytoplasm. In terms of biological role, catalyzes the GTP-dependent ribosomal translocation step during translation elongation. During this step, the ribosome changes from the pre-translocational (PRE) to the post-translocational (POST) state as the newly formed A-site-bound peptidyl-tRNA and P-site-bound deacylated tRNA move to the P and E sites, respectively. Catalyzes the coordinated movement of the two tRNA molecules, the mRNA and conformational changes in the ribosome. The chain is Elongation factor G from Ectopseudomonas mendocina (strain ymp) (Pseudomonas mendocina).